Consider the following 344-residue polypeptide: uncharacterized protein (344 aa).

Residues 1–19 (MRIIFYLTLLLFIFNKVKS) form the signal peptide. The propeptide at 323-344 (SATRNQISIMVLILSVLLVLIL) is removed in mature form.

It is found in the cell membrane. This is an uncharacterized protein from Dictyostelium discoideum (Social amoeba).